A 355-amino-acid chain; its full sequence is MAAHADEPVFAARRYNEETTRESAFVYTNANNTRDPFEGPNYHIAPRWVYNLASLWMIIVVIASIFTNSLVIVATAKFKKLRHPLNWILVNLAIADLGETVLASTISVFNQVFGYFVLGHPMCIFEGWTVSVCGITALWSLTIISWERWVVVCKPFGNVKFDGKWAAGGIIFAWTWAIIWCTPPIFGWSRYWPHGLKTSCGPDVFSGSEDPGVASYMVTLLLTCCILPLSVIIICYIFVWNAIHQVAQQQKDSESTQKAEKEVSRMVVVMILAFILCWGPYASFATFSALNPGYAWHPLAAALPAYFAKSATIYNPIIYVFMNRQFRSCIMQLFGKKVEDASEVSGSTTEVSTAS.

Residues 1-49 (MAAHADEPVFAARRYNEETTRESAFVYTNANNTRDPFEGPNYHIAPRWV) are Extracellular-facing. Asn-31 is a glycosylation site (N-linked (GlcNAc...) asparagine). A helical membrane pass occupies residues 50-74 (YNLASLWMIIVVIASIFTNSLVIVA). Residues 75–86 (TAKFKKLRHPLN) are Cytoplasmic-facing. A helical transmembrane segment spans residues 87-112 (WILVNLAIADLGETVLASTISVFNQV). Residues 113 to 126 (FGYFVLGHPMCIFE) are Extracellular-facing. Cys-123 and Cys-200 form a disulfide bridge. Residues 127 to 146 (GWTVSVCGITALWSLTIISW) form a helical membrane-spanning segment. Residues 147-165 (ERWVVVCKPFGNVKFDGKW) are Cytoplasmic-facing. Residues 166 to 189 (AAGGIIFAWTWAIIWCTPPIFGWS) form a helical membrane-spanning segment. The Extracellular segment spans residues 190-215 (RYWPHGLKTSCGPDVFSGSEDPGVAS). Residues 216-243 (YMVTLLLTCCILPLSVIIICYIFVWNAI) form a helical membrane-spanning segment. Residues 244 to 265 (HQVAQQQKDSESTQKAEKEVSR) are Cytoplasmic-facing. Residues 266–289 (MVVVMILAFILCWGPYASFATFSA) form a helical membrane-spanning segment. Topologically, residues 290–297 (LNPGYAWH) are extracellular. A helical transmembrane segment spans residues 298–322 (PLAAALPAYFAKSATIYNPIIYVFM). Lys-309 bears the N6-(retinylidene)lysine mark. At 323 to 355 (NRQFRSCIMQLFGKKVEDASEVSGSTTEVSTAS) the chain is on the cytoplasmic side.

The protein belongs to the G-protein coupled receptor 1 family. Opsin subfamily. The color pigments are found in the cone photoreceptor cells.

The protein resides in the membrane. Its function is as follows. Visual pigments are the light-absorbing molecules that mediate vision. They consist of an apoprotein, opsin, covalently linked to cis-retinal. This Psalidodon fasciatus (Banded astyanax) protein is Green-sensitive opsin-1 (G103).